A 282-amino-acid chain; its full sequence is DNA-directed RNA polymerase III subunit RPC5 (282 aa).

Residues 1-70 (MSIDNKLFVT…TGEEEEDDPV (70 aa)) form a disordered region. Composition is skewed to acidic residues over residues 10-35 (TEED…DMIA) and 60-70 (DTGEEEEDDPV). T61 carries the phosphothreonine modification.

Component of the RNA polymerase III (Pol III) complex consisting of 17 subunits. Interacts with RPC53/RPC4. RPC53/RPC4, RPC37/RPC5 and RPC11/RPC10 probably form a Pol III subcomplex.

The protein localises to the nucleus. DNA-dependent RNA polymerase catalyzes the transcription of DNA into RNA using the four ribonucleoside triphosphates as substrates. Specific peripheric component of RNA polymerase III which synthesizes small RNAs, such as 5S rRNA and tRNAs. The RPC53/RPC4-RPC37/RPC5 subcomplex is required for terminator recognition and reinitiation. In Saccharomyces cerevisiae (strain ATCC 204508 / S288c) (Baker's yeast), this protein is DNA-directed RNA polymerase III subunit RPC5 (RPC37).